Here is a 296-residue protein sequence, read N- to C-terminus: F-box/LRR-repeat protein 15 (296 aa).

Residues 16–63 form the F-box domain; it reads LLDLPWEDVLVSHVFCHLPLRLLVSLQRVSKSFRSLIQVYLDNCRTFD. 5 LRR repeats span residues 138–159, 164–185, 190–211, 216–237, and 242–263; these read RLQHLSLAHCEWVDSLALRSLA, MLRSLDLTACRQLKDPAVCYLA, ELRALSVAVNANITDTAVEEVA, EMERLDLTGCLRVRNEAIRTLA, and KLQSLKVNHCHNVTESSLGVLR.

This sequence belongs to the FBXL15 family. In terms of assembly, part of the SCF (SKP1-CUL1-F-box) E3 ubiquitin-protein ligase complex SCF(FBXL15).

It is found in the cytoplasm. The protein operates within protein modification; protein ubiquitination. Functionally, substrate recognition component of a SCF (SKP1-CUL1-F-box protein) E3 ubiquitin-protein ligase complex which mediates the ubiquitination and subsequent proteasomal degradation of target proteins. Acts as a positive regulator of the BMP signaling pathway. Required for dorsal/ventral pattern formation. The polypeptide is F-box/LRR-repeat protein 15 (fbxl15) (Danio rerio (Zebrafish)).